We begin with the raw amino-acid sequence, 395 residues long: Type III polyketide synthase A (395 aa).

63–70 serves as a coordination point for CoA; sequence KLEHLCKT. Cysteine 172 functions as the Nucleophile in the catalytic mechanism. Position 224 to 225 (224 to 225) interacts with substrate; that stretch reads GD. CoA is bound by residues leucine 274, 314–317, and alanine 317; that span reads GGPA.

The protein belongs to the thiolase-like superfamily. Chalcone/stilbene synthases family. In terms of assembly, homodimer. Interacts with 4CLL1/ACOS5 and TKPR1. As to expression, expressed in flowers and flower buds (at protein level), and, at very low levels, in roots, seedlings, leaves and stems. Mostly confined to anther tapetal cells.

It is found in the endoplasmic reticulum. It functions in the pathway secondary metabolite biosynthesis; flavonoid biosynthesis. Its function is as follows. Plant type III polyketide synthases (PKSs) that catalyzes the condensation of malonyl-CoA units with various CoA ester starter molecules to generate a diverse array of natural products including long-chain alkyl alpha-pyrones. Accepts up to C(20) chain-length fatty acyl CoAs as starter substrates, and carries out sequential condensations with malonyl-CoA to produce triketide and tetraketide alpha-pyrones, potential sporopollenin precursors. Favorite substrates for are midchain- and v-hydroxylated fatty acyl-CoAs (e.g. 12-hydroxyoctadecanoyl-CoA and 16-hydroxyhexadecanoyl-CoA). Required for pollen development and sporopollenin biosynthesis, the major constituent of exine in the outer pollen wall. In vitro, can use 4-coumaroyl-coenzyme A as substrate to produce bis-noryangonin and fatty acyl-coenzyme A as substrate to produce medium-chain alkyl pyrones. May play a role in both the synthesis of pollen fatty acids and phenolics found in exine. The polypeptide is Type III polyketide synthase A (Arabidopsis thaliana (Mouse-ear cress)).